The following is an 882-amino-acid chain: Formin-like protein 9 (882 aa).

The first 19 residues, 1 to 19 (MGMAMRCVLVLFSVSPVLL), serve as a signal peptide directing secretion. The segment at 67 to 92 (SRGRRHKRYSEAPAPAPAPVPAHQAR) is disordered. The helical transmembrane segment at 138–158 (IVALGVVGLCLVVLGVVIAAF) threads the bilayer. 3 disordered regions span residues 178–202 (RHGSRDQRSPAATRKVSSHPSPDPL), 293–316 (THDSPSDSSYQSLSPDCTSRLSPK), and 401–471 (TMTN…PLPR). Residues 298-308 (SDSSYQSLSPD) are compositionally biased toward low complexity. Pro residues predominate over residues 427–441 (KPAPPPPPQKNPPPN). In terms of domain architecture, FH2 spans 462–882 (VGKDGSPLPR…QTLNLVLPLK (421 aa)).

This sequence belongs to the formin-like family. Class-I subfamily.

It is found in the membrane. The protein is Formin-like protein 9 (FH9) of Oryza sativa subsp. japonica (Rice).